Reading from the N-terminus, the 123-residue chain is Large ribosomal subunit protein bL12 (123 aa).

The protein belongs to the bacterial ribosomal protein bL12 family. Homodimer. Part of the ribosomal stalk of the 50S ribosomal subunit. Forms a multimeric L10(L12)X complex, where L10 forms an elongated spine to which 2 to 4 L12 dimers bind in a sequential fashion. Binds GTP-bound translation factors.

In terms of biological role, forms part of the ribosomal stalk which helps the ribosome interact with GTP-bound translation factors. Is thus essential for accurate translation. This Chlorobium phaeovibrioides (strain DSM 265 / 1930) (Prosthecochloris vibrioformis (strain DSM 265)) protein is Large ribosomal subunit protein bL12.